The primary structure comprises 376 residues: Succinyl-diaminopimelate desuccinylase (376 aa).

Zn(2+) is bound at residue H66. D68 is an active-site residue. D99 serves as a coordination point for Zn(2+). The active-site Proton acceptor is E133. E134, E162, and H348 together coordinate Zn(2+).

This sequence belongs to the peptidase M20A family. DapE subfamily. As to quaternary structure, homodimer. Zn(2+) is required as a cofactor. The cofactor is Co(2+).

The catalysed reaction is N-succinyl-(2S,6S)-2,6-diaminopimelate + H2O = (2S,6S)-2,6-diaminopimelate + succinate. Its pathway is amino-acid biosynthesis; L-lysine biosynthesis via DAP pathway; LL-2,6-diaminopimelate from (S)-tetrahydrodipicolinate (succinylase route): step 3/3. In terms of biological role, catalyzes the hydrolysis of N-succinyl-L,L-diaminopimelic acid (SDAP), forming succinate and LL-2,6-diaminopimelate (DAP), an intermediate involved in the bacterial biosynthesis of lysine and meso-diaminopimelic acid, an essential component of bacterial cell walls. The polypeptide is Succinyl-diaminopimelate desuccinylase (Xanthomonas euvesicatoria pv. vesicatoria (strain 85-10) (Xanthomonas campestris pv. vesicatoria)).